We begin with the raw amino-acid sequence, 235 residues long: Sperm-associated microtubule inner protein 5 (235 aa).

Microtubule inner protein component of sperm flagellar doublet microtubules. As to expression, expressed in sperm.

It is found in the cytoplasm. The protein localises to the cytoskeleton. Its subcellular location is the flagellum axoneme. It localises to the nucleus. In terms of biological role, microtubule inner protein (MIP) part of the dynein-decorated doublet microtubules (DMTs) in flagellum axoneme. May serve to reinforce and thus stabilize the microtubule structure in the sperm flagella. The chain is Sperm-associated microtubule inner protein 5 (SPMIP5) from Bos taurus (Bovine).